Here is a 256-residue protein sequence, read N- to C-terminus: DNA repair protein RecO (256 aa).

Belongs to the RecO family.

Its function is as follows. Involved in DNA repair and RecF pathway recombination. The chain is DNA repair protein RecO from Rhizobium etli (strain CIAT 652).